The following is a 373-amino-acid chain: Flagellar P-ring protein (373 aa).

A signal peptide spans 1 to 30 (MTNRWSFDVNKNLVTVLFTWLCLSISTAHA).

Belongs to the FlgI family. As to quaternary structure, the basal body constitutes a major portion of the flagellar organelle and consists of four rings (L,P,S, and M) mounted on a central rod.

It localises to the periplasm. It is found in the bacterial flagellum basal body. Assembles around the rod to form the L-ring and probably protects the motor/basal body from shearing forces during rotation. The chain is Flagellar P-ring protein from Aliivibrio fischeri (strain ATCC 700601 / ES114) (Vibrio fischeri).